The primary structure comprises 433 residues: MAFRDVLDIEVAAGNGGDGSMSFHRAKYLEKGGPDGGHGGRGGSVILRAIEGVESLERLVGQRKFKAPNGAYGEGRLRQGADGEDLYIDVPVGTTAFDRDSGKVIADLVRVGQEKVIARGGLGGRGNSTFVTSTRQAPRFAELGTPGEKRRVRLELRLIADVGLVGYPNAGKSSLLAALSRANPAIADYPFTTLSPILGVVESADGEKRFTMADIPGIIEGASEGKGLGLEFLRHISRTRLLVYVLDVTRDPAEELRQLQTELRTYDPSLLENVALIALNKIELVDADLAAMVEDELAEFGLPVLPVSAKTGQGLPELRQALFDLLPDRELWARTHALEEEPEEVREEPLTLTFREDAPEKPGEAPERVWEVHGGGFEARIVRFARHLEDAAEYLSNLFKRQGLYNALKRAGAREGDTVEIGSFRFEYYADED.

The Obg domain maps to Met1 to Ile159. The OBG-type G domain maps to Ala160–Pro327. Residues Gly166 to Ser173, Phe191 to Ser195, Asp214 to Gly217, Asn280 to Glu283, and Ser308 to Lys310 contribute to the ATP site. Positions 173 and 193 each coordinate Mg(2+). Positions Pro342 to Ala430 constitute an OCT domain.

The protein belongs to the TRAFAC class OBG-HflX-like GTPase superfamily. OBG GTPase family. In terms of assembly, monomer. The cofactor is Mg(2+).

It is found in the cytoplasm. Functionally, an essential GTPase which binds GTP, GDP and possibly (p)ppGpp with moderate affinity, with high nucleotide exchange rates and a fairly low GTP hydrolysis rate. Plays a role in control of the cell cycle, stress response, ribosome biogenesis and in those bacteria that undergo differentiation, in morphogenesis control. In Deinococcus geothermalis (strain DSM 11300 / CIP 105573 / AG-3a), this protein is GTPase Obg.